A 240-amino-acid polypeptide reads, in one-letter code: Small ribosomal subunit protein eS4 (240 aa).

Residues 37–99 (VPLVVLLRDV…RGEFFRVFPD (63 aa)) form the S4 RNA-binding domain.

This sequence belongs to the eukaryotic ribosomal protein eS4 family.

This Halorubrum lacusprofundi (strain ATCC 49239 / DSM 5036 / JCM 8891 / ACAM 34) protein is Small ribosomal subunit protein eS4.